Consider the following 125-residue polypeptide: Protein ApaG (125 aa).

Positions 3 to 125 constitute an ApaG domain; the sequence is TAVTEGIEVT…FPLVVPGSLN (123 aa).

The protein is Protein ApaG of Anaeromyxobacter dehalogenans (strain 2CP-1 / ATCC BAA-258).